The sequence spans 254 residues: MDYLLISSETDPASQNLKKHVENYGYSVFNIEKKSTQTNYSEFPQSEMYIFLSKHASESKKPTLTVHTPGNLTDDNSHGGNPEEISPCNPVFNTLMLQNMNKYNEMEEYKELGFDVSFEVLHHGPTDLKAPSAFVEIGSSEEQWQIDDAAEIITNSLIDTLNSIQNSEYDEKEKIIGIGGGHYSPKFTKLALREEYYVGYLTPKHAKLSENILNQLTSKQEFDFIGIDWKGLYGEDKRKYVEFFDENDISWQRV.

Positions 61–82 (KPTLTVHTPGNLTDDNSHGGNP) are disordered. Over residues 65-74 (TVHTPGNLTD) the composition is skewed to polar residues.

Belongs to the DtdA deacylase family. As to quaternary structure, monomer. Zn(2+) serves as cofactor.

The enzyme catalyses a D-aminoacyl-tRNA + H2O = a tRNA + a D-alpha-amino acid + H(+). It carries out the reaction glycyl-tRNA(Ala) + H2O = tRNA(Ala) + glycine + H(+). D-aminoacyl-tRNA deacylase with broad substrate specificity. By recycling D-aminoacyl-tRNA to D-amino acids and free tRNA molecules, this enzyme counteracts the toxicity associated with the formation of D-aminoacyl-tRNA entities in vivo. This is D-aminoacyl-tRNA deacylase from Methanococcus maripaludis (strain DSM 14266 / JCM 13030 / NBRC 101832 / S2 / LL).